We begin with the raw amino-acid sequence, 407 residues long: Imidazolonepropionase (407 aa).

Fe(3+) is bound by residues His-68 and His-70. Zn(2+) contacts are provided by His-68 and His-70. 4-imidazolone-5-propanoate is bound by residues Arg-77, Tyr-140, and His-173. Tyr-140 provides a ligand contact to N-formimidoyl-L-glutamate. Residue His-238 participates in Fe(3+) binding. Residue His-238 participates in Zn(2+) binding. Residue Gln-241 coordinates 4-imidazolone-5-propanoate. Asp-313 contacts Fe(3+). Residue Asp-313 coordinates Zn(2+). 2 residues coordinate N-formimidoyl-L-glutamate: Asn-315 and Gly-317. Thr-318 is a 4-imidazolone-5-propanoate binding site.

The protein belongs to the metallo-dependent hydrolases superfamily. HutI family. Requires Zn(2+) as cofactor. Fe(3+) is required as a cofactor.

The protein resides in the cytoplasm. The catalysed reaction is 4-imidazolone-5-propanoate + H2O = N-formimidoyl-L-glutamate. The protein operates within amino-acid degradation; L-histidine degradation into L-glutamate; N-formimidoyl-L-glutamate from L-histidine: step 3/3. Functionally, catalyzes the hydrolytic cleavage of the carbon-nitrogen bond in imidazolone-5-propanoate to yield N-formimidoyl-L-glutamate. It is the third step in the universal histidine degradation pathway. In Burkholderia lata (strain ATCC 17760 / DSM 23089 / LMG 22485 / NCIMB 9086 / R18194 / 383), this protein is Imidazolonepropionase.